The chain runs to 470 residues: Meiosis-specific with OB domain-containing protein (470 aa).

The OB DNA-binding region spans 167 to 272 (IINVLAAVRS…EANILLNFIR (106 aa)).

This sequence belongs to the MEIOB family. Component of a multiprotein complex with RPA2 and SPATA22. Interacts with SPATA22. Interacts with the complex BRME1:HSF2BP:BRCA2.

Its subcellular location is the cytoplasm. The protein resides in the nucleus. It is found in the chromosome. In terms of biological role, single-stranded DNA-binding protein required for homologous recombination in meiosis I. Required for double strand breaks (DSBs) repair and crossover formation and promotion of faithful and complete synapsis. Not required for the initial loading of recombinases but required to maintain a proper number of RAD51 and DMC1 foci after the zygotene stage. May act by ensuring the stabilization of recombinases, which is required for successful homology search and meiotic recombination. Displays Single-stranded DNA 3'-5' exonuclease activity in vitro. This chain is Meiosis-specific with OB domain-containing protein, found in Rattus norvegicus (Rat).